We begin with the raw amino-acid sequence, 435 residues long: Bud site selection protein RAX1 (435 aa).

Topologically, residues 1–297 (MKEELSKVSS…PFSNHTSISR (297 aa)) are cytoplasmic. Residues 159–248 (VDEIMKRRSQ…LEMDCFPKFL (90 aa)) enclose the RGS domain. At serine 167 the chain carries Phosphoserine. Residues 298 to 318 (IGFGLLWLGIGFWIGYVLIFL) form a helical membrane-spanning segment. At 319–325 (AYSRAIR) the chain is on the extracellular side. Residues 326-346 (VVTVVPFTLGCYCIVCGMYQV) form a helical membrane-spanning segment. The Cytoplasmic portion of the chain corresponds to 347–409 (DIVYSWFGVT…FTRQLLRKRG (63 aa)). The chain crosses the membrane as a helical span at residues 410 to 430 (LWCLLLVVGATAAFTVIFSCV). Topologically, residues 431-435 (PGRRV) are extracellular.

In terms of assembly, forms an heterodimeric complex with RAX2. Also interacts with BUD8 and BUD9.

The protein localises to the cell membrane. The protein resides in the bud neck. It localises to the bud tip. Required for the establishment of the bipolar budding pattern. Involved in selecting bud sites at both the distal and proximal poles of daughter cells as well as near previously used division sites on mother cells. The RAX1-RAX2 complex performs the asymmetric localization of the two cortical landmarks, BUD8 and BUD9, at the distal and proximal poles, respectively. This chain is Bud site selection protein RAX1, found in Saccharomyces cerevisiae (strain ATCC 204508 / S288c) (Baker's yeast).